A 179-amino-acid polypeptide reads, in one-letter code: Large ribosomal subunit protein uL5 (179 aa).

It belongs to the universal ribosomal protein uL5 family. As to quaternary structure, part of the 50S ribosomal subunit; part of the 5S rRNA/L5/L18/L25 subcomplex. Contacts the 5S rRNA and the P site tRNA. Forms a bridge to the 30S subunit in the 70S ribosome.

Functionally, this is one of the proteins that bind and probably mediate the attachment of the 5S RNA into the large ribosomal subunit, where it forms part of the central protuberance. In the 70S ribosome it contacts protein S13 of the 30S subunit (bridge B1b), connecting the 2 subunits; this bridge is implicated in subunit movement. Contacts the P site tRNA; the 5S rRNA and some of its associated proteins might help stabilize positioning of ribosome-bound tRNAs. This Rickettsia peacockii (strain Rustic) protein is Large ribosomal subunit protein uL5.